A 505-amino-acid polypeptide reads, in one-letter code: DEAD-box ATP-dependent RNA helicase 8 (505 aa).

A disordered region spans residues 1–85 (MNNRGRYPPG…GQIPGGNSNG (85 aa)). Residues 20–31 (PNPNYQSRSGYQ) are compositionally biased toward polar residues. Residues 43–71 (NYAQNHQQQFQQAPSQPHQYQQQQQQQQQ) show a composition bias toward low complexity. A Q motif motif is present at residues 131-159 (NEFEDYFLKRELLMGIYEKGFERPSPIQE). Positions 162-332 (IPIALTGRDI…DRFLTNPYVI (171 aa)) constitute a Helicase ATP-binding domain. 175 to 182 (AKNGTGKT) provides a ligand contact to ATP. Threonine 237 bears the Phosphothreonine mark. The short motif at 280 to 283 (DEAD) is the DEAD box element. The Helicase C-terminal domain occupies 342 to 502 (GITQFYAFVE…QIPPHIDQAI (161 aa)).

The protein belongs to the DEAD box helicase family. DDX6/DHH1 subfamily.

It localises to the cytoplasm. The protein localises to the P-body. It catalyses the reaction ATP + H2O = ADP + phosphate + H(+). Its function is as follows. ATP-dependent RNA helicase involved in mRNA turnover, and more specifically in mRNA decapping. The protein is DEAD-box ATP-dependent RNA helicase 8 (RH8) of Arabidopsis thaliana (Mouse-ear cress).